The following is a 140-amino-acid chain: Required for drug-induced death protein 1 (140 aa).

The tract at residues 1 to 95 (MTVGARLRSK…DKPKKRYRRK (95 aa)) is disordered. Acidic residues predominate over residues 29–53 (EETDAIVEHLEGEDEDPESQDCERE). The chain crosses the membrane as a helical span at residues 118–140 (LQGFAAAYSAPFGVATSVVSFVR).

Its subcellular location is the membrane. In terms of biological role, regulates drug efflux through modulation of ABCB1 localization and activity. This is Required for drug-induced death protein 1 from Rattus norvegicus (Rat).